We begin with the raw amino-acid sequence, 327 residues long: Homeotic protein distal-less (327 aa).

A DNA-binding region (homeobox) is located at residues 124–183; the sequence is MRKPRTIYSSLQLQQLNRRFQRTQYLALPERAELAASLGLTQTQVKIWFQNRRSKYKKMM. Positions 181–303 are disordered; sequence KMMKAAQGPG…THHHNPPPQM (123 aa). Residues 231-249 show a composition bias toward low complexity; that stretch reads LPPGHSPTPSSTPVSELSP. Over residues 266 to 275 the composition is skewed to basic and acidic residues; it reads QKPHWIDHKP. Residues 276–286 show a composition bias toward pro residues; sequence PPQMTPQPPHP.

In terms of tissue distribution, expressed in the embryo in limb primordia of the head and thoracic segments. Expressed in regions of the larval leg, wing, antennal and haltere disks that form the distal-most regions of the mature structures (in the leg this corresponds to the tarsus and the distal tibia). Found in the optic center of the developing larval brain.

Its subcellular location is the nucleus. Transcription factor that plays a role in larval and adult appendage development. Specifies the identity of ventral appendages (including legs and antennae) and suppresses dorsal appendage development. Involved in patterning the distal-proximal limb axis. May control the adhesive properties of cells during limb morphogenesis. Also has a secondary role in the normal patterning of the wing margin. The chain is Homeotic protein distal-less (Dll) from Drosophila melanogaster (Fruit fly).